The sequence spans 710 residues: Elongation factor G (710 aa).

In terms of domain architecture, tr-type G spans 8–290 (SQYRNIGISA…AIVEYLPSPM (283 aa)). Residues 17-24 (AHIDAGKT), 88-92 (DTPGH), and 142-145 (NKMD) each bind GTP.

The protein belongs to the TRAFAC class translation factor GTPase superfamily. Classic translation factor GTPase family. EF-G/EF-2 subfamily.

The protein localises to the cytoplasm. Functionally, catalyzes the GTP-dependent ribosomal translocation step during translation elongation. During this step, the ribosome changes from the pre-translocational (PRE) to the post-translocational (POST) state as the newly formed A-site-bound peptidyl-tRNA and P-site-bound deacylated tRNA move to the P and E sites, respectively. Catalyzes the coordinated movement of the two tRNA molecules, the mRNA and conformational changes in the ribosome. This is Elongation factor G from Buchnera aphidicola subsp. Baizongia pistaciae (strain Bp).